A 506-amino-acid polypeptide reads, in one-letter code: Maturase K (506 aa).

It belongs to the intron maturase 2 family. MatK subfamily.

The protein localises to the plastid. It is found in the chloroplast. In terms of biological role, usually encoded in the trnK tRNA gene intron. Probably assists in splicing its own and other chloroplast group II introns. This chain is Maturase K, found in Artanema fimbriatum.